Consider the following 366-residue polypeptide: Nucleoporin SEH1 (366 aa).

6 WD repeats span residues 18–57 (AHRD…NWRR), 63–104 (CHGG…TEKD), 111–152 (QWIR…RIYE), 161–209 (RWNL…VIYE), 226–267 (DMPC…TAIL), and 290–329 (GDQR…QWVK).

Belongs to the WD repeat SEC13 family. As to quaternary structure, component of the nuclear pore complex (NPC). Probably part of the GATOR complex.

It localises to the nucleus. Its subcellular location is the nuclear pore complex. It is found in the lysosome membrane. Its function is as follows. Probable component of the nuclear pore complex (NPC) which is involved in the trafficking of macromolecules between the cytoplasm and nucleus. In terms of biological role, as a component of the GATOR complex may function in the amino acid-sensing branch of the TORC1 signaling pathway. The chain is Nucleoporin SEH1 from Caenorhabditis briggsae.